The following is a 740-amino-acid chain: N-acetylated-alpha-linked acidic dipeptidase 2 (740 aa).

At 1–7 (MARPRHL) the chain is on the cytoplasmic side. The helical; Signal-anchor for type II membrane protein transmembrane segment at 8–31 (RGLGMCITAVLASFIAGFTVGWFI) threads the bilayer. The Extracellular segment spans residues 32–740 (KPLKETTTSA…AAAGTLTNVL (709 aa)). N-linked (GlcNAc...) asparagine glycans are attached at residues Asn111, Asn143, and Asn185. Substrate is bound by residues Arg200 and Asn247. Residues Thr259 and Tyr262 each contribute to the Ca(2+) site. The tract at residues 264–577 (AKEYTFRLPV…QLRGALVYEL (314 aa)) is NAALADase. The N-linked (GlcNAc...) asparagine glycan is linked to Asn314. The Zn(2+) site is built by His367 and Asp377. Glu414 contacts substrate. Catalysis depends on Glu414, which acts as the Nucleophile; for NAALADase activity. Glu415 contacts Zn(2+). Residues Glu423 and Glu426 each coordinate Ca(2+). Asp443 is a Zn(2+) binding site. A glycan (N-linked (GlcNAc...) asparagine) is linked at Asn449. Residues 507–508 (SG), 524–526 (RAR), Tyr542, and 542–543 (YH) each bind substrate. His543 lines the Zn(2+) pocket. A glycan (N-linked (GlcNAc...) asparagine) is linked at Asn603. Residue Ser618 is the Charge relay system of the active site. A glycan (N-linked (GlcNAc...) asparagine) is linked at Asn628. Active-site charge relay system residues include Asp656 and His679. 689 to 690 (KY) lines the substrate pocket.

It belongs to the peptidase M28 family. M28B subfamily. Homodimer. Zn(2+) serves as cofactor. As to expression, expressed ovary, testes and lung, but not brain.

Its subcellular location is the cell membrane. It carries out the reaction Release of an unsubstituted, C-terminal glutamyl residue, typically from Ac-Asp-Glu or folylpoly-gamma-glutamates.. In terms of biological role, has N-acetylated-alpha-linked-acidic dipeptidase (NAALADase) activity. Also exhibits a dipeptidyl-peptidase IV type activity. Inactivates the peptide neurotransmitter N-acetylaspartylglutamate. This chain is N-acetylated-alpha-linked acidic dipeptidase 2 (Naalad2), found in Mus musculus (Mouse).